The sequence spans 211 residues: Interleukin-6 (211 aa).

The first 24 residues, 1–24 (MKFLSARDFQPVAFLGLMLLTATA), serve as a signal peptide directing secretion. An intrachain disulfide couples cysteine 70 to cysteine 76. Serine 79 bears the Phosphoserine mark. A disulfide bridge links cysteine 99 with cysteine 109.

It belongs to the IL-6 superfamily. Component of a hexamer of two molecules each of IL6, IL6R and IL6ST; first binds to IL6R to associate with the signaling subunit IL6ST. Interacts with IL6R (via the N-terminal ectodomain); this interaction may be affected by IL6R-binding with SORL1, hence decreasing IL6 cis signaling. Interacts with SORL1 (via the N-terminal ectodomain); this interaction leads to IL6 internalization and lysosomal degradation. May form a trimeric complex with the soluble SORL1 ectodomain and soluble IL6R receptor; this interaction might stabilize circulating IL6, hence promoting IL6 trans signaling.

It is found in the secreted. Functionally, cytokine with a wide variety of biological functions in immunity, tissue regeneration, and metabolism. Binds to IL6R, then the complex associates to the signaling subunit IL6ST/gp130 to trigger the intracellular IL6-signaling pathway. The interaction with the membrane-bound IL6R and IL6ST stimulates 'classic signaling', whereas the binding of IL6 and soluble IL6R to IL6ST stimulates 'trans-signaling'. Alternatively, 'cluster signaling' occurs when membrane-bound IL6:IL6R complexes on transmitter cells activate IL6ST receptors on neighboring receiver cells. In terms of biological role, IL6 is a potent inducer of the acute phase response. Rapid production of IL6 contributes to host defense during infection and tissue injury, but excessive IL6 synthesis is involved in disease pathology. In the innate immune response, is synthesized by myeloid cells, such as macrophages and dendritic cells, upon recognition of pathogens through toll-like receptors (TLRs) at the site of infection or tissue injury. In the adaptive immune response, is required for the differentiation of B-cells into immunoglolin-secreting cells. Plays a major role in the differentiation of CD4(+) T cell subsets. Essential factor for the development of T follicular helper (Tfh) cells that are required for the induction of germinal-center formation. Together with IL21, controls the early generation of Tfh cells and are critical for an effective antibody response to acute viral infection. Required to drive naive CD4(+) T cells to the Th17 lineage, through 'cluster signaling' by dendritic cells. Also required for proliferation of myeloma cells and the survival of plasmablast cells. Its function is as follows. Acts as an essential factor in bone homeostasis and on vessels directly or indirectly by induction of VEGF, resulting in increased angiogenesis activity and vascular permeability. Induces, through 'trans-signaling' and synergistically with IL1B and TNF, the production of VEGF. Involved in metabolic controls, is discharged into the bloodstream after muscle contraction increasing lipolysis and improving insulin resistance. 'Trans-signaling' in central nervous system regulates energy and glucose homeostasis. Mediates, through GLP-1, crosstalk between insulin-sensitive tissues, intestinal L cells and pancreatic islets to adapt to changes in insulin demand. Also acts as a myokine. Plays a protective role during liver injury, being required for maintenance of tissue regeneration. Also has a pivotal role in iron metabolism by regulating HAMP/hepcidin expression upon inflammation or bacterial infection. Through activation of IL6ST-YAP-NOTCH pathway, induces inflammation-induced epithelial regeneration. The protein is Interleukin-6 of Rattus norvegicus (Rat).